A 269-amino-acid chain; its full sequence is Regulatory protein RecX (269 aa).

The protein belongs to the RecX family.

It is found in the cytoplasm. Modulates RecA activity. This chain is Regulatory protein RecX, found in Geobacillus kaustophilus (strain HTA426).